Consider the following 265-residue polypeptide: 4-hydroxy-tetrahydrodipicolinate reductase (265 aa).

Residues 7-12 (GASGRM), Asp33, 96-98 (GTT), and 120-123 (AANM) contribute to the NAD(+) site. Residue His153 is the Proton donor/acceptor of the active site. His154 contacts (S)-2,3,4,5-tetrahydrodipicolinate. Lys157 acts as the Proton donor in catalysis. A (S)-2,3,4,5-tetrahydrodipicolinate-binding site is contributed by 163-164 (GT).

Belongs to the DapB family.

It localises to the cytoplasm. It catalyses the reaction (S)-2,3,4,5-tetrahydrodipicolinate + NAD(+) + H2O = (2S,4S)-4-hydroxy-2,3,4,5-tetrahydrodipicolinate + NADH + H(+). The catalysed reaction is (S)-2,3,4,5-tetrahydrodipicolinate + NADP(+) + H2O = (2S,4S)-4-hydroxy-2,3,4,5-tetrahydrodipicolinate + NADPH + H(+). The protein operates within amino-acid biosynthesis; L-lysine biosynthesis via DAP pathway; (S)-tetrahydrodipicolinate from L-aspartate: step 4/4. Its function is as follows. Catalyzes the conversion of 4-hydroxy-tetrahydrodipicolinate (HTPA) to tetrahydrodipicolinate. This chain is 4-hydroxy-tetrahydrodipicolinate reductase, found in Cupriavidus metallidurans (strain ATCC 43123 / DSM 2839 / NBRC 102507 / CH34) (Ralstonia metallidurans).